The chain runs to 186 residues: Ribosome-recycling factor (186 aa).

The protein belongs to the RRF family.

Its subcellular location is the cytoplasm. In terms of biological role, responsible for the release of ribosomes from messenger RNA at the termination of protein biosynthesis. May increase the efficiency of translation by recycling ribosomes from one round of translation to another. The sequence is that of Ribosome-recycling factor from Bordetella parapertussis (strain 12822 / ATCC BAA-587 / NCTC 13253).